A 494-amino-acid polypeptide reads, in one-letter code: Glutamate--tRNA ligase (494 aa).

The 'HIGH' region motif lies at 9 to 19 (PSPTGDPHLGT). A 'KMSKS' region motif is present at residues 250-254 (KLSKR). Lys253 is a binding site for ATP.

It belongs to the class-I aminoacyl-tRNA synthetase family. Glutamate--tRNA ligase type 1 subfamily. Monomer.

The protein localises to the cytoplasm. The enzyme catalyses tRNA(Glu) + L-glutamate + ATP = L-glutamyl-tRNA(Glu) + AMP + diphosphate. In terms of biological role, catalyzes the attachment of glutamate to tRNA(Glu) in a two-step reaction: glutamate is first activated by ATP to form Glu-AMP and then transferred to the acceptor end of tRNA(Glu). This chain is Glutamate--tRNA ligase, found in Pseudoalteromonas translucida (strain TAC 125).